The following is a 285-amino-acid chain: MVKKWLIQFAVMLSVLSTFTYSASAVGVTAITGNNSFDTAMPIGYWKYKNIDTTILEAGQDEAYFTFTANKGEKVYMRSTYQSAYTGMKIEIYDKNRIPVSQGTEVINPNTFSSFIYANADAQNTTDTFYVKVSRGTYTGNMYFTLSIEDRIKSGSGTFQFSGVAENKGNTSLSPSGSDSSVIKVDLTNQSGIPRDAIVTRVQTTATQTPSQGNTRHLIMTSENNEWSRALVNSSTSGSYDISLSDQLSVAKVWSFKYNTLATARSTMSNVKAKIDYEYDVTKQF.

An N-terminal signal peptide occupies residues 1-25 (MVKKWLIQFAVMLSVLSTFTYSASA).

This is an uncharacterized protein from Bacillus subtilis (strain 168).